A 283-amino-acid polypeptide reads, in one-letter code: Ribosomal RNA small subunit methyltransferase A (283 aa).

The S-adenosyl-L-methionine site is built by asparagine 22, leucine 24, glycine 49, glutamate 70, and asparagine 113.

Belongs to the class I-like SAM-binding methyltransferase superfamily. rRNA adenine N(6)-methyltransferase family. RsmA subfamily.

Its subcellular location is the cytoplasm. It catalyses the reaction adenosine(1518)/adenosine(1519) in 16S rRNA + 4 S-adenosyl-L-methionine = N(6)-dimethyladenosine(1518)/N(6)-dimethyladenosine(1519) in 16S rRNA + 4 S-adenosyl-L-homocysteine + 4 H(+). Functionally, specifically dimethylates two adjacent adenosines (A1518 and A1519) in the loop of a conserved hairpin near the 3'-end of 16S rRNA in the 30S particle. May play a critical role in biogenesis of 30S subunits. This Myxococcus xanthus (strain DK1622) protein is Ribosomal RNA small subunit methyltransferase A.